The following is a 190-amino-acid chain: Protein GrpE (190 aa).

Residues 1-31 (MTEEQKKYEDAENLESKSENPEEASAEKSEN) show a composition bias toward basic and acidic residues. The interval 1 to 39 (MTEEQKKYEDAENLESKSENPEEASAEKSENGVEDLQAE) is disordered.

Belongs to the GrpE family. In terms of assembly, homodimer.

It localises to the cytoplasm. Participates actively in the response to hyperosmotic and heat shock by preventing the aggregation of stress-denatured proteins, in association with DnaK and GrpE. It is the nucleotide exchange factor for DnaK and may function as a thermosensor. Unfolded proteins bind initially to DnaJ; upon interaction with the DnaJ-bound protein, DnaK hydrolyzes its bound ATP, resulting in the formation of a stable complex. GrpE releases ADP from DnaK; ATP binding to DnaK triggers the release of the substrate protein, thus completing the reaction cycle. Several rounds of ATP-dependent interactions between DnaJ, DnaK and GrpE are required for fully efficient folding. The sequence is that of Protein GrpE from Zymomonas mobilis subsp. mobilis (strain ATCC 31821 / ZM4 / CP4).